A 102-amino-acid chain; its full sequence is NAD(P)H-quinone oxidoreductase subunit 4L (102 aa).

The next 3 membrane-spanning stretches (helical) occupy residues 4–24, 33–53, and 65–85; these read LQFF…GLIV, MSIE…SNFV, and VFVI…VLGI.

The protein belongs to the complex I subunit 4L family. NDH-1 can be composed of about 15 different subunits; different subcomplexes with different compositions have been identified which probably have different functions.

The protein resides in the cellular thylakoid membrane. The enzyme catalyses a plastoquinone + NADH + (n+1) H(+)(in) = a plastoquinol + NAD(+) + n H(+)(out). The catalysed reaction is a plastoquinone + NADPH + (n+1) H(+)(in) = a plastoquinol + NADP(+) + n H(+)(out). In terms of biological role, NDH-1 shuttles electrons from an unknown electron donor, via FMN and iron-sulfur (Fe-S) centers, to quinones in the respiratory and/or the photosynthetic chain. The immediate electron acceptor for the enzyme in this species is believed to be plastoquinone. Couples the redox reaction to proton translocation, and thus conserves the redox energy in a proton gradient. Cyanobacterial NDH-1 also plays a role in inorganic carbon-concentration. The chain is NAD(P)H-quinone oxidoreductase subunit 4L from Synechococcus sp. (strain JA-3-3Ab) (Cyanobacteria bacterium Yellowstone A-Prime).